The primary structure comprises 234 residues: Carboxy-S-adenosyl-L-methionine synthase (234 aa).

S-adenosyl-L-methionine-binding positions include Y35, 60-62 (GCS), 83-84 (DN), 109-110 (DI), N124, and R191.

Belongs to the class I-like SAM-binding methyltransferase superfamily. Cx-SAM synthase family. Homodimer.

The catalysed reaction is prephenate + S-adenosyl-L-methionine = carboxy-S-adenosyl-L-methionine + 3-phenylpyruvate + H2O. Its function is as follows. Catalyzes the conversion of S-adenosyl-L-methionine (SAM) to carboxy-S-adenosyl-L-methionine (Cx-SAM). The protein is Carboxy-S-adenosyl-L-methionine synthase of Campylobacter concisus (strain 13826).